Here is a 257-residue protein sequence, read N- to C-terminus: Trans-aconitate 2-methyltransferase (257 aa).

Belongs to the methyltransferase superfamily. Tam family.

It localises to the cytoplasm. The catalysed reaction is trans-aconitate + S-adenosyl-L-methionine = (E)-3-(methoxycarbonyl)pent-2-enedioate + S-adenosyl-L-homocysteine. Its function is as follows. Catalyzes the S-adenosylmethionine monomethyl esterification of trans-aconitate. The chain is Trans-aconitate 2-methyltransferase from Rhizobium meliloti (strain 1021) (Ensifer meliloti).